A 1556-amino-acid polypeptide reads, in one-letter code: Ferredoxin-dependent glutamate synthase 2 (1556 aa).

The active-site For GATase activity is C37. Residues 37–431 (CGVGFIANLR…PGQMIAVDLA (395 aa)) form the Glutamine amidotransferase type-2 domain. Residues C1173, C1179, and C1184 each coordinate [3Fe-4S] cluster. The disordered stretch occupies residues 1533–1556 (PSEKDSPEANGDVSLTGEKTLTSV).

This sequence belongs to the glutamate synthase family. Requires [3Fe-4S] cluster as cofactor. The cofactor is FAD. FMN is required as a cofactor.

The catalysed reaction is 2 oxidized [2Fe-2S]-[ferredoxin] + 2 L-glutamate = L-glutamine + 2 reduced [2Fe-2S]-[ferredoxin] + 2-oxoglutarate + 2 H(+). The protein operates within amino-acid biosynthesis; L-glutamate biosynthesis via GLT pathway; L-glutamate from 2-oxoglutarate and L-glutamine (ferredoxin route): step 1/1. Its pathway is energy metabolism; nitrogen metabolism. The protein is Ferredoxin-dependent glutamate synthase 2 (gltS) of Synechocystis sp. (strain ATCC 27184 / PCC 6803 / Kazusa).